The sequence spans 224 residues: MIDSYCYHPIHNRWQGIRPVSSPGILPTVVEQSGRGERAFDIYSRLLRERIIFLGTGVDDQVADALVAQMLFLEAEDPEKDIQIYINSPGGSVTAGLAIYDTMQQVAPDVVTICYGLAASMGAFLLCGGTKGKRLALPNARIMIHQPLGGAQGQAVDIEIQAKEILFLKETLNGLLAEHTGQPLNKIAEDTDRDHFLSPAKAVEYGLIDRVVDSLTGGGIVKEG.

Residue Ser120 is the Nucleophile of the active site. The active site involves His145.

This sequence belongs to the peptidase S14 family. Fourteen ClpP subunits assemble into 2 heptameric rings which stack back to back to give a disk-like structure with a central cavity, resembling the structure of eukaryotic proteasomes.

It is found in the cytoplasm. It catalyses the reaction Hydrolysis of proteins to small peptides in the presence of ATP and magnesium. alpha-casein is the usual test substrate. In the absence of ATP, only oligopeptides shorter than five residues are hydrolyzed (such as succinyl-Leu-Tyr-|-NHMec, and Leu-Tyr-Leu-|-Tyr-Trp, in which cleavage of the -Tyr-|-Leu- and -Tyr-|-Trp bonds also occurs).. Functionally, cleaves peptides in various proteins in a process that requires ATP hydrolysis. Has a chymotrypsin-like activity. Plays a major role in the degradation of misfolded proteins. The sequence is that of ATP-dependent Clp protease proteolytic subunit 1 from Prochlorococcus marinus (strain MIT 9313).